Here is a 156-residue protein sequence, read N- to C-terminus: Small ribosomal subunit protein uS7 (156 aa).

It belongs to the universal ribosomal protein uS7 family. Part of the 30S ribosomal subunit. Contacts proteins S9 and S11.

One of the primary rRNA binding proteins, it binds directly to 16S rRNA where it nucleates assembly of the head domain of the 30S subunit. Is located at the subunit interface close to the decoding center, probably blocks exit of the E-site tRNA. This is Small ribosomal subunit protein uS7 from Vibrio vulnificus (strain CMCP6).